We begin with the raw amino-acid sequence, 338 residues long: MIQKNWQELIKPEKLQVNPGHDPKRFATVIAEPLERGFGMTLGNALRRILLSSLQGAAVTSIHIDGVLHEFSSIPGVREDVTDIILNVKDVAIRMQGDGPKRMVAKKTGPGVLLAGDIQTVGDVAILNPNLPICTLDEGAELRIEFTVDTGKGYVAADRNRPEDAPIGLIPIDSLYSPVRKVSYKVENTREGQILDYDKLTLQIETNGSITAEDALAYAARILQDQLEIFVNFEEPKRESETTAIQTLPFSPALLKKVDELELSVRSANCLKNDNIVYIGDLIQKSETEMLRTPNFGRKSLNEIKEVLASLGLHLGMEVPGWPPENIEELAKRFEEHY.

Residues 1-234 are alpha N-terminal domain (alpha-NTD); sequence MIQKNWQELI…DQLEIFVNFE (234 aa). The segment at 250–338 is alpha C-terminal domain (alpha-CTD); the sequence is FSPALLKKVD…ELAKRFEEHY (89 aa).

The protein belongs to the RNA polymerase alpha chain family. In terms of assembly, homodimer. The RNAP catalytic core consists of 2 alpha, 1 beta, 1 beta' and 1 omega subunit. When a sigma factor is associated with the core the holoenzyme is formed, which can initiate transcription.

It catalyses the reaction RNA(n) + a ribonucleoside 5'-triphosphate = RNA(n+1) + diphosphate. Its function is as follows. DNA-dependent RNA polymerase catalyzes the transcription of DNA into RNA using the four ribonucleoside triphosphates as substrates. This is DNA-directed RNA polymerase subunit alpha from Xanthobacter autotrophicus (strain ATCC BAA-1158 / Py2).